The sequence spans 1076 residues: ESX secretion system protein YueB (1076 aa).

A helical membrane pass occupies residues 9-29 (IKLISAVIIILLLPVLFFRFI). Disordered regions lie at residues 372-404 (RLSL…DIED) and 423-552 (IKDI…ETDI). Basic and acidic residues predominate over residues 423–439 (IKDISEGLKEPEQEKPT). Composition is skewed to polar residues over residues 449 to 495 (DDSP…NIET) and 503 to 522 (SKNV…SKTD). Residues 552 to 622 (ISGAKKRLNE…TKKLVDFDNN (71 aa)) are a coiled coil. The next 5 membrane-spanning stretches (helical) occupy residues 904–924 (TVPP…IGYF), 938–958 (ALFG…GLNI), 964–984 (DQTI…SAFI), 995–1015 (GWVA…DLIM), and 1040–1060 (TMGI…PLII).

The protein belongs to the EsaA family.

It localises to the cell membrane. In terms of biological role, required for YukE secretion. Probable component or regulator of the ESX/ESAT-6-like secretion system (BsEss). Bacteriophage SPP1 receptor. Essential for the irreversible adsorption of the bacteriophage. The polypeptide is ESX secretion system protein YueB (yueB) (Bacillus subtilis (strain 168)).